Consider the following 138-residue polypeptide: Putative nickel-responsive regulator (138 aa).

Positions 80, 91, 93, and 99 each coordinate Ni(2+).

This sequence belongs to the transcriptional regulatory CopG/NikR family. It depends on Ni(2+) as a cofactor.

Its function is as follows. Transcriptional regulator. This chain is Putative nickel-responsive regulator, found in Campylobacter hominis (strain ATCC BAA-381 / DSM 21671 / CCUG 45161 / LMG 19568 / NCTC 13146 / CH001A).